The chain runs to 92 residues: Small ribosomal subunit protein uS19 (92 aa).

It belongs to the universal ribosomal protein uS19 family.

In terms of biological role, protein S19 forms a complex with S13 that binds strongly to the 16S ribosomal RNA. The protein is Small ribosomal subunit protein uS19 of Mesorhizobium japonicum (strain LMG 29417 / CECT 9101 / MAFF 303099) (Mesorhizobium loti (strain MAFF 303099)).